The sequence spans 500 residues: NAD(P)H-quinone oxidoreductase chain 4, chloroplastic (500 aa).

The next 14 membrane-spanning stretches (helical) occupy residues 4-24 (FPWLTIIVVFPISAGSLMLFL), 35-55 (YTICICILELLLTTYAFCYNF), 87-107 (IGTILLTGFITTLATLAAFPV), 113-130 (FFHFLMLAMYSGQIGSFS), 134-154 (LLLFFIMWELELIPVYLLLSM), 167-187 (FILYTAGSSIFLLIGVLGISL), 211-231 (ILFYIGFLIAFAVKSPIIPLH), 242-262 (HYSTCMLLAGILLKMGAYGLV), 272-292 (AHSMFSPWLLVVGTIQIIYAA), 305-325 (IAYSSVSHMGFIIIGISSITD), 330-350 (GAILQIISHGFIGAALFFLAG), 386-406 (LALPGMSGFIAEFIVFFGIIT), 416-436 (IFIIFVMAIGMILTPIYLLSM), and 462-482 (LFLSISILLPIIGIGIYPDFV).

This sequence belongs to the complex I subunit 4 family.

Its subcellular location is the plastid. The protein localises to the chloroplast thylakoid membrane. The catalysed reaction is a plastoquinone + NADH + (n+1) H(+)(in) = a plastoquinol + NAD(+) + n H(+)(out). It catalyses the reaction a plastoquinone + NADPH + (n+1) H(+)(in) = a plastoquinol + NADP(+) + n H(+)(out). The chain is NAD(P)H-quinone oxidoreductase chain 4, chloroplastic (ndhD) from Arabidopsis thaliana (Mouse-ear cress).